A 227-amino-acid polypeptide reads, in one-letter code: Cytidylate kinase (227 aa).

10–18 (GPASSGKST) lines the ATP pocket.

This sequence belongs to the cytidylate kinase family. Type 1 subfamily.

Its subcellular location is the cytoplasm. The enzyme catalyses CMP + ATP = CDP + ADP. The catalysed reaction is dCMP + ATP = dCDP + ADP. The sequence is that of Cytidylate kinase from Streptococcus agalactiae serotype V (strain ATCC BAA-611 / 2603 V/R).